The chain runs to 603 residues: Proline--tRNA ligase (603 aa).

It belongs to the class-II aminoacyl-tRNA synthetase family. ProS type 1 subfamily. Homodimer.

It is found in the cytoplasm. The catalysed reaction is tRNA(Pro) + L-proline + ATP = L-prolyl-tRNA(Pro) + AMP + diphosphate. Its function is as follows. Catalyzes the attachment of proline to tRNA(Pro) in a two-step reaction: proline is first activated by ATP to form Pro-AMP and then transferred to the acceptor end of tRNA(Pro). As ProRS can inadvertently accommodate and process non-cognate amino acids such as alanine and cysteine, to avoid such errors it has two additional distinct editing activities against alanine. One activity is designated as 'pretransfer' editing and involves the tRNA(Pro)-independent hydrolysis of activated Ala-AMP. The other activity is designated 'posttransfer' editing and involves deacylation of mischarged Ala-tRNA(Pro). The misacylated Cys-tRNA(Pro) is not edited by ProRS. The polypeptide is Proline--tRNA ligase (Microcystis aeruginosa (strain NIES-843 / IAM M-2473)).